Here is a 459-residue protein sequence, read N- to C-terminus: Ribulose bisphosphate carboxylase large chain (459 aa).

Residues 1–2 constitute a propeptide that is removed on maturation; sequence MS. N-acetylproline is present on proline 3. Lysine 14 carries the post-translational modification N6,N6,N6-trimethyllysine. Substrate-binding residues include asparagine 123 and threonine 173. The active-site Proton acceptor is lysine 175. Position 177 (lysine 177) interacts with substrate. The Mg(2+) site is built by lysine 201, aspartate 203, and glutamate 204. N6-carboxylysine is present on lysine 201. Residue histidine 294 is the Proton acceptor of the active site. Residues arginine 295, histidine 327, and serine 379 each coordinate substrate.

It belongs to the RuBisCO large chain family. Type I subfamily. In terms of assembly, heterohexadecamer of 8 large chains and 8 small chains; disulfide-linked. The disulfide link is formed within the large subunit homodimers. Mg(2+) serves as cofactor. In terms of processing, the disulfide bond which can form in the large chain dimeric partners within the hexadecamer appears to be associated with oxidative stress and protein turnover.

The protein localises to the plastid. The protein resides in the chloroplast. It carries out the reaction 2 (2R)-3-phosphoglycerate + 2 H(+) = D-ribulose 1,5-bisphosphate + CO2 + H2O. It catalyses the reaction D-ribulose 1,5-bisphosphate + O2 = 2-phosphoglycolate + (2R)-3-phosphoglycerate + 2 H(+). RuBisCO catalyzes two reactions: the carboxylation of D-ribulose 1,5-bisphosphate, the primary event in carbon dioxide fixation, as well as the oxidative fragmentation of the pentose substrate in the photorespiration process. Both reactions occur simultaneously and in competition at the same active site. In Streptopus lanceolatus (Rose twisted stalk), this protein is Ribulose bisphosphate carboxylase large chain.